The primary structure comprises 103 residues: MGKLTLLLLAILVWLQYSLWFGKNGIHDYTRVNNDVAAQQATNAKLKARNDQLFAEIDDLNGGQEALEERARNELSMTRPGETFYRLVPDASKRAQSAGQNNR.

At 1 to 3 the chain is on the cytoplasmic side; that stretch reads MGK. Residues 4 to 21 form a helical membrane-spanning segment; that stretch reads LTLLLLAILVWLQYSLWF. Topologically, residues 22–103 are periplasmic; it reads GKNGIHDYTR…RAQSAGQNNR (82 aa). Positions 31–71 form a coiled coil; the sequence is RVNNDVAAQQATNAKLKARNDQLFAEIDDLNGGQEALEERA.

Belongs to the FtsB family. Part of a complex composed of FtsB, FtsL and FtsQ.

Its subcellular location is the cell inner membrane. Functionally, essential cell division protein. May link together the upstream cell division proteins, which are predominantly cytoplasmic, with the downstream cell division proteins, which are predominantly periplasmic. The protein is Cell division protein FtsB of Escherichia coli O81 (strain ED1a).